The following is a 199-amino-acid chain: Ribonuclease HII (199 aa).

Residues 12–199 (DLLAGTDEAG…FGPVKKILEG (188 aa)) enclose the RNase H type-2 domain. A divalent metal cation contacts are provided by aspartate 18, glutamate 19, and aspartate 110.

This sequence belongs to the RNase HII family. Mn(2+) serves as cofactor. It depends on Mg(2+) as a cofactor.

It is found in the cytoplasm. The enzyme catalyses Endonucleolytic cleavage to 5'-phosphomonoester.. Its function is as follows. Endonuclease that specifically degrades the RNA of RNA-DNA hybrids. This is Ribonuclease HII from Marinomonas sp. (strain MWYL1).